The following is a 767-amino-acid chain: Photosystem I P700 chlorophyll a apoprotein A1 (767 aa).

A disordered region spans residues 1 to 22 (MTISPPESGEKNKKVLEDPVKA). The segment covering 8–22 (SGEKNKKVLEDPVKA) has biased composition (basic and acidic residues). 8 helical membrane-spanning segments follow: residues 76-99 (IFSA…FHGA), 162-185 (LMAL…FHYH), 201-225 (LNHH…HIGA), 309-327 (VSHH…GHMY), 368-391 (RHAQ…HHMY), 407-433 (LGLF…IAMV), 455-477 (ALIS…LYIH), and 558-576 (LMIH…LILL). Positions 600 and 609 each coordinate [4Fe-4S] cluster. The next 2 membrane-spanning stretches (helical) occupy residues 616-637 (HVFL…HFSW) and 681-703 (ISMY…MFLF). Divinylchlorophyll a' is bound at residue H692. Divinyl chlorophyll a is bound by residues M700 and Y708. W709 provides a ligand contact to phylloquinone. The helical transmembrane segment at 741-761 (AVGVTHFLVGGIATTWAFFHA) threads the bilayer.

This sequence belongs to the PsaA/PsaB family. The PsaA/B heterodimer binds the P700 divinyl chlorophyll special pair and subsequent electron acceptors. PSI consists of a core antenna complex that captures photons, and an electron transfer chain that converts photonic excitation into a charge separation. The cyanobacterial PSI reaction center is composed of one copy each of PsaA,B,C,D,E,F,I,J,K,L,M and X, and forms trimeric complexes. The cofactor is PSI electron transfer chain: 5 divinyl chlorophyll a, 1 divinyl chlorophyll a', 2 phylloquinones and 3 4Fe-4S clusters. PSI core antenna: 90 divinyl chlorophyll a, 22 carotenoids, 3 phospholipids and 1 galactolipid. P700 is a divinyl chlorophyll a/divinyl chlorophyll a' dimer, A0 is one or more divinyl chlorophyll a, A1 is one or both phylloquinones and FX is a shared 4Fe-4S iron-sulfur center..

Its subcellular location is the cellular thylakoid membrane. The enzyme catalyses reduced [plastocyanin] + hnu + oxidized [2Fe-2S]-[ferredoxin] = oxidized [plastocyanin] + reduced [2Fe-2S]-[ferredoxin]. In terms of biological role, psaA and PsaB bind P700, the primary electron donor of photosystem I (PSI), as well as the electron acceptors A0, A1 and FX. PSI is a plastocyanin/cytochrome c6-ferredoxin oxidoreductase, converting photonic excitation into a charge separation, which transfers an electron from the donor P700 chlorophyll pair to the spectroscopically characterized acceptors A0, A1, FX, FA and FB in turn. Oxidized P700 is reduced on the lumenal side of the thylakoid membrane by plastocyanin or cytochrome c6. In Prochlorococcus marinus (strain MIT 9301), this protein is Photosystem I P700 chlorophyll a apoprotein A1.